Consider the following 359-residue polypeptide: S-adenosylmethionine:tRNA ribosyltransferase-isomerase (359 aa).

It belongs to the QueA family. In terms of assembly, monomer.

It localises to the cytoplasm. The catalysed reaction is 7-aminomethyl-7-carbaguanosine(34) in tRNA + S-adenosyl-L-methionine = epoxyqueuosine(34) in tRNA + adenine + L-methionine + 2 H(+). The protein operates within tRNA modification; tRNA-queuosine biosynthesis. Its function is as follows. Transfers and isomerizes the ribose moiety from AdoMet to the 7-aminomethyl group of 7-deazaguanine (preQ1-tRNA) to give epoxyqueuosine (oQ-tRNA). In Synechococcus elongatus (strain ATCC 33912 / PCC 7942 / FACHB-805) (Anacystis nidulans R2), this protein is S-adenosylmethionine:tRNA ribosyltransferase-isomerase.